The sequence spans 300 residues: Ubiquitin carboxyl-terminal hydrolase 2 (300 aa).

The UCH catalytic domain occupies 2-220 (SWTTIESDAG…IRFNLMVICK (219 aa)). The active-site Nucleophile is cysteine 83. The active-site Proton donor is the histidine 159. In terms of domain architecture, ULD spans 261 to 290 (NFVGLFVELSKLLVKDRIDKNTWNSTLETA).

Belongs to the peptidase C12 family. In terms of assembly, component of the 26S proteasome. Interacts with rpn10.

Its subcellular location is the nucleus. The enzyme catalyses Thiol-dependent hydrolysis of ester, thioester, amide, peptide and isopeptide bonds formed by the C-terminal Gly of ubiquitin (a 76-residue protein attached to proteins as an intracellular targeting signal).. Its function is as follows. Ubiquitin-protein hydrolase is involved both in the processing of ubiquitin precursors and of ubiquitinated proteins. This enzyme is a thiol protease that recognizes and hydrolyzes a peptide bond at the C-terminal glycine of ubiquitin. The chain is Ubiquitin carboxyl-terminal hydrolase 2 (uch2) from Schizosaccharomyces pombe (strain 972 / ATCC 24843) (Fission yeast).